The sequence spans 714 residues: Palmitoyltransferase ZDHHC5 (714 aa).

The Cytoplasmic segment spans residues 1–13 (MPAESAKRFKPSK). A helical membrane pass occupies residues 14–34 (YVPVSAAAIFLVGATTLFFAF). The Extracellular segment spans residues 35 to 52 (TCPGLSLSVSPAVPVYNA). Residues 53 to 73 (VVFLFVLANFSMATFMDPGVF) traverse the membrane as a helical segment. Over 74 to 148 (PRAEEDEDKE…NCIGRRNYRY (75 aa)) the chain is Cytoplasmic. Y91 bears the Phosphotyrosine mark. The DHHC domain maps to 104-154 (KWCATCRFYRPPRCSHCSVCDNCVEEFDHHCPWVNNCIGRRNYRYFFLFLL). C134 acts as the S-palmitoyl cysteine intermediate in catalysis. The helical transmembrane segment at 149-169 (FFLFLLSLTAHITGVFGFGLL) threads the bilayer. Topologically, residues 170–191 (YVLYHMEELSGVRTAVTMAVMC) are extracellular. Residues 192 to 212 (VAGLFFIPVAGLTGFHVVLVA) traverse the membrane as a helical segment. Residues 213–714 (RGRTTNEQVT…VGGTTYEISV (502 aa)) lie on the Cytoplasmic side of the membrane. At S247 the chain carries Phosphoserine. The disordered stretch occupies residues 289–714 (GELRRTKSKG…VGGTTYEISV (426 aa)). Phosphothreonine is present on T294. 2 positions are modified to phosphoserine: S296 and S299. Position 303 is a phosphothreonine (T303). S345 carries the post-translational modification Phosphoserine. 2 positions are modified to phosphothreonine: T348 and T350. Residues 359 to 373 (SSSSASAAMPHSSSA) show a composition bias toward low complexity. Phosphoserine occurs at positions 380, 398, 406, and 409. Over residues 388–398 (AESSRQPSYRS) the composition is skewed to polar residues. T411 is subject to Phosphothreonine. Residues 422 to 432 (SSGSRSSSLKS) show a composition bias toward low complexity. 3 positions are modified to phosphoserine: S425, S429, and S432. T436 carries the post-translational modification Phosphothreonine. Residues 445–478 (SIRSEGTTSTSYKSLANQTRNGSLSYDSLLTPSD) show a composition bias toward polar residues. A phosphoserine mark is found at S529 and S554. R616 is modified (omega-N-methylarginine). The residue at position 620 (S620) is a Phosphoserine. At T658 the chain carries Phosphothreonine. The span at 667–678 (TAYSKSNGQPKS) shows a compositional bias: polar residues. Residues 683–692 (PPGPGQPPLS) are compositionally biased toward pro residues. At S693 the chain carries Phosphoserine. R696 bears the Omega-N-methylarginine mark.

This sequence belongs to the DHHC palmitoyltransferase family. ERF2/ZDHHC9 subfamily. Phosphorylation regulates association with endocytic proteins and its subcellular localization. Phosphorylation by LYN during fatty acid uptake leads to inactivation of the activity. Post-translationally, autopalmitoylated. Palmitoylation of the C-terminal tail regulates stimulation-dependent plasma membrane motility.

The protein resides in the cell membrane. The enzyme catalyses L-cysteinyl-[protein] + hexadecanoyl-CoA = S-hexadecanoyl-L-cysteinyl-[protein] + CoA. Palmitoyltransferase that catalyzes the addition of palmitate onto various protein substrates such as CTNND2, CD36, GSDMD, NLRP3, NOD1, NOD2, STAT3 and S1PR1 thus plays a role in various biological processes including cell adhesion, inflammation, fatty acid uptake, bacterial sensing or cardiac functions. Plays an important role in the regulation of synapse efficacy by mediating palmitoylation of delta-catenin/CTNND2, thereby increasing synaptic delivery and surface stabilization of alpha-amino-3-hydroxy-5-methyl-4-isoxazole propionic acid receptors (AMPARs). Under basal conditions, remains at the synaptic membrane through FYN-mediated phosphorylation that prevents association with endocytic proteins. Neuronal activity enhances the internalization and trafficking of DHHC5 from spines to dendritic shafts where it palmitoylates delta-catenin/CTNND2. Regulates cell adhesion at the plasma membrane by palmitoylating GOLGA7B and DSG2. Plays a role in innate immune response by mediating the palmitoylation of NOD1 and NOD2 and their proper recruitment to the bacterial entry site and phagosomes. Also participates in fatty acid uptake by palmitoylating CD36 and thereby targeting it to the plasma membrane. Upon binding of fatty acids to CD36, gets phosphorylated by LYN leading to inactivation and subsequent CD36 caveolar endocytosis. Controls oligodendrocyte development by catalyzing STAT3 palmitoylation. Acts as a regulator of inflammatory response by mediating palmitoylation of NLRP3 and GSDMD. Palmitoylates NLRP3 to promote inflammasome assembly and activation. Activates pyroptosis by catalyzing palmitoylation of gasdermin-D (GSDMD), thereby promoting membrane translocation and pore formation of GSDMD. This is Palmitoyltransferase ZDHHC5 (ZDHHC5) from Bos taurus (Bovine).